Consider the following 298-residue polypeptide: Peroxisomal 2,4-dienoyl-CoA reductase [(3E)-enoyl-CoA-producing] (298 aa).

19–24 (GGGSGI) is an NADP(+) binding site. Substrate is bound at residue Arg-44. Asp-69 provides a ligand contact to NADP(+). Substrate-binding positions include Arg-71, Phe-101, and 109–111 (SPN). NADP(+)-binding positions include Lys-173 and 200-206 (PGPIGGT). The tract at residues 279–298 (SRAVEKRSRAKPVGLPTSKL) is disordered. The Microbody targeting signal motif lies at 296–298 (SKL).

This sequence belongs to the short-chain dehydrogenases/reductases (SDR) family. 2,4-dienoyl-CoA reductase subfamily.

The protein resides in the peroxisome. It carries out the reaction a (2E,4Z)-dienoyl-CoA + NADPH + H(+) = a 4,5-saturated-(3E)-enoyl-CoA + NADP(+). It catalyses the reaction a (2E,4E)-dienoyl-CoA + NADPH + H(+) = a 4,5-saturated-(3E)-enoyl-CoA + NADP(+). Its function is as follows. Auxiliary enzyme of beta-oxidation. Participates in the degradation of unsaturated fatty enoyl-CoA esters having double bonds in both even- and odd-numbered positions in peroxisome. Catalyzes the NADP-dependent reduction of 2,4-dienoyl-CoA to yield trans-3-enoyl-CoA. The polypeptide is Peroxisomal 2,4-dienoyl-CoA reductase [(3E)-enoyl-CoA-producing] (Arabidopsis thaliana (Mouse-ear cress)).